The sequence spans 490 residues: ATP synthase subunit beta, chloroplastic (490 aa).

Residue Thr-6 is modified to Phosphothreonine. Residue Ser-13 is modified to Phosphoserine. 172-179 lines the ATP pocket; that stretch reads GGAGVGKT.

This sequence belongs to the ATPase alpha/beta chains family. As to quaternary structure, F-type ATPases have 2 components, CF(1) - the catalytic core - and CF(0) - the membrane proton channel. CF(1) has five subunits: alpha(3), beta(3), gamma(1), delta(1), epsilon(1). CF(0) has four main subunits: a(1), b(1), b'(1) and c(9-12).

It localises to the plastid. It is found in the chloroplast thylakoid membrane. The enzyme catalyses ATP + H2O + 4 H(+)(in) = ADP + phosphate + 5 H(+)(out). Produces ATP from ADP in the presence of a proton gradient across the membrane. The catalytic sites are hosted primarily by the beta subunits. This Aethionema cordifolium (Lebanon stonecress) protein is ATP synthase subunit beta, chloroplastic.